Consider the following 160-residue polypeptide: uncharacterized protein (160 aa).

Positions 20–152 constitute an HTH marR-type domain; sequence EREIWVLYMK…VYEGLSILSR (133 aa). Residues 66–89 constitute a DNA-binding region (H-T-H motif); sequence VSDIAEKMGASLSNTTGLLDRLEK.

This is an uncharacterized protein from Bacillus subtilis (strain 168).